The chain runs to 528 residues: Linear element-associated protein hop1 (528 aa).

Residues 11–212 (TKSDFTLKNL…RGEFKDIVSF (202 aa)) enclose the HORMA domain. The segment at 334–385 (LLNCECGDSTEDSEMFQCERCDGWVHCACYGFESDSDPRQPNQLLCYTCLLV) adopts a PHD-type zinc-finger fold. Residues C337, C339, C351, C354, H359, C362, C379, and C382 each coordinate Zn(2+). Residues 507-528 (RPKKVSKTSNTKETDTMKPLRI) form a disordered region. Over residues 516–528 (NTKETDTMKPLRI) the composition is skewed to basic and acidic residues.

As to quaternary structure, interacts (via N-terminus) with rec10; the interaction is direct. Interacts (via C-terminus) with rec15 (via C-terminus); the interaction is direct.

Its subcellular location is the nucleus. It is found in the chromosome. Functionally, facilitates initiation of meiotic recombination and DNA double-strand break (DSB) formation at DSB hotspot sites by enhancing the interaction between rec10 and rec15. In Schizosaccharomyces pombe (strain 972 / ATCC 24843) (Fission yeast), this protein is Linear element-associated protein hop1.